The chain runs to 74 residues: NAD(P)H-quinone oxidoreductase subunit O (74 aa).

This sequence belongs to the complex I NdhO subunit family. NDH-1 can be composed of about 15 different subunits; different subcomplexes with different compositions have been identified which probably have different functions.

The protein localises to the cellular thylakoid membrane. The catalysed reaction is a plastoquinone + NADH + (n+1) H(+)(in) = a plastoquinol + NAD(+) + n H(+)(out). It carries out the reaction a plastoquinone + NADPH + (n+1) H(+)(in) = a plastoquinol + NADP(+) + n H(+)(out). In terms of biological role, NDH-1 shuttles electrons from an unknown electron donor, via FMN and iron-sulfur (Fe-S) centers, to quinones in the respiratory and/or the photosynthetic chain. The immediate electron acceptor for the enzyme in this species is believed to be plastoquinone. Couples the redox reaction to proton translocation, and thus conserves the redox energy in a proton gradient. Cyanobacterial NDH-1 also plays a role in inorganic carbon-concentration. The protein is NAD(P)H-quinone oxidoreductase subunit O of Synechococcus sp. (strain RCC307).